Here is a 372-residue protein sequence, read N- to C-terminus: Neutral protease 2 homolog MGYG_06241 (372 aa).

The signal sequence occupies residues 1–19; it reads MQFFTAIAAISALVAPALA. The propeptide occupies 20 to 188; sequence LPTQELPQAP…THFAGTLNRR (169 aa). Intrachain disulfides connect Cys195–Cys264 and Cys271–Cys289. His313 lines the Zn(2+) pocket. Glu314 is an active-site residue. The Zn(2+) site is built by His317 and Asp328.

It belongs to the peptidase M35 family. Requires Zn(2+) as cofactor.

The protein resides in the secreted. It carries out the reaction Preferential cleavage of bonds with hydrophobic residues in P1'. Also 3-Asn-|-Gln-4 and 8-Gly-|-Ser-9 bonds in insulin B chain.. In terms of biological role, secreted metalloproteinase that allows assimilation of proteinaceous substrates. Shows high activities on basic nuclear substrates such as histone and protamine. May be involved in virulence. The chain is Neutral protease 2 homolog MGYG_06241 from Arthroderma gypseum (strain ATCC MYA-4604 / CBS 118893) (Microsporum gypseum).